Reading from the N-terminus, the 273-residue chain is tRNA (guanine-N(7)-)-methyltransferase A (273 aa).

S-adenosyl-L-methionine contacts are provided by Gly86, Glu109, Arg111, Asn142, Ala143, and Leu162. Asp165 is a catalytic residue. The tract at residues 166–174 is alphaC helix; it reads PHFKKTKHK. S-adenosyl-L-methionine-binding residues include Thr240 and Glu242. Residues 240–248 form an alpha6 helix region; sequence TEEGKKVQR.

It belongs to the class I-like SAM-binding methyltransferase superfamily. TrmB family. In terms of assembly, catalytic component of the METTL1-WDR4 complex, composed of mettl1 and wdr4.

Its subcellular location is the nucleus. The enzyme catalyses guanosine(46) in tRNA + S-adenosyl-L-methionine = N(7)-methylguanosine(46) in tRNA + S-adenosyl-L-homocysteine. The catalysed reaction is a guanosine in mRNA + S-adenosyl-L-methionine = an N(7)-methylguanosine in mRNA + S-adenosyl-L-homocysteine. It carries out the reaction a guanosine in miRNA + S-adenosyl-L-methionine = an N(7)-methylguanosine in miRNA + S-adenosyl-L-homocysteine. It functions in the pathway tRNA modification; N(7)-methylguanine-tRNA biosynthesis. Functionally, catalytic component of METTL1-WDR4 methyltransferase complex that mediates the formation of N(7)-methylguanine in a subset of RNA species, such as tRNAs, mRNAs and microRNAs (miRNAs). Catalyzes the formation of N(7)-methylguanine at position 46 (m7G46) in a large subset of tRNAs that contain the 5'-RAGGU-3' motif within the variable loop. M7G46 interacts with C13-G22 in the D-loop to stabilize tRNA tertiary structure and protect tRNAs from decay. Also acts as a methyltransferase for a subset of internal N(7)-methylguanine in mRNAs. Internal N(7)-methylguanine methylation of mRNAs in response to stress promotes their relocalization to stress granules, thereby suppressing their translation. Also methylates a specific subset of miRNAs. This is tRNA (guanine-N(7)-)-methyltransferase A (mettl1-A) from Xenopus tropicalis (Western clawed frog).